The sequence spans 227 residues: Cytidylate kinase (227 aa).

ATP is bound at residue 12–20 (GPSGAGKGT).

It belongs to the cytidylate kinase family. Type 1 subfamily.

The protein localises to the cytoplasm. The catalysed reaction is CMP + ATP = CDP + ADP. It catalyses the reaction dCMP + ATP = dCDP + ADP. In Sodalis glossinidius (strain morsitans), this protein is Cytidylate kinase.